Reading from the N-terminus, the 458-residue chain is ATP synthase subunit beta (458 aa).

148-155 (GGAGVGKT) provides a ligand contact to ATP.

It belongs to the ATPase alpha/beta chains family. In terms of assembly, F-type ATPases have 2 components, CF(1) - the catalytic core - and CF(0) - the membrane proton channel. CF(1) has five subunits: alpha(3), beta(3), gamma(1), delta(1), epsilon(1). CF(0) has three main subunits: a(1), b(2) and c(9-12). The alpha and beta chains form an alternating ring which encloses part of the gamma chain. CF(1) is attached to CF(0) by a central stalk formed by the gamma and epsilon chains, while a peripheral stalk is formed by the delta and b chains.

It is found in the cell inner membrane. It carries out the reaction ATP + H2O + 4 H(+)(in) = ADP + phosphate + 5 H(+)(out). Produces ATP from ADP in the presence of a proton gradient across the membrane. The catalytic sites are hosted primarily by the beta subunits. The polypeptide is ATP synthase subunit beta (Pseudomonas entomophila (strain L48)).